We begin with the raw amino-acid sequence, 762 residues long: Primary amine oxidase, lung isozyme (762 aa).

The first 16 residues, 1-16, serve as a signal peptide directing secretion; sequence MFIFIFLSLWTLLVMG. The interval 23–54 is disordered; the sequence is GSEEGVGKQCHPSLPPRCPSRSPSDQPWTHPD. An N-linked (GlcNAc...) asparagine glycan is attached at Asn136. A disulfide bridge connects residues Cys197 and Cys198. A glycan (O-linked (GalNAc...) threonine) is linked at Thr211. 2 N-linked (GlcNAc...) asparagine glycosylation sites follow: Asn231 and Asn293. 383–393 provides a ligand contact to substrate; it reads YMDACFGMGKF. Catalysis depends on Asp385, which acts as the Proton acceptor. Cys403 and Cys429 form a disulfide bridge. 467 to 472 contacts substrate; that stretch reads LLNYDY. Tyr470 functions as the Schiff-base intermediate with substrate; via topaquinone in the catalytic mechanism. Residue Tyr470 is modified to 2',4',5'-topaquinone. Positions 519 and 521 each coordinate Cu cation. Ca(2+) contacts are provided by Asp528, Leu529, Asp530, and Glu571. Position 577 to 584 (577 to 584) interacts with heparin; sequence PLGGGSPR. Asn617 carries an N-linked (GlcNAc...) asparagine glycan. Residues Phe662 and Asn664 each coordinate Ca(2+). The N-linked (GlcNAc...) asparagine glycan is linked to Asn665. Residues Glu666, Asp672, and Leu673 each contribute to the Ca(2+) site. Residue His683 participates in Cu cation binding. Cys733 and Cys740 form a disulfide bridge.

It belongs to the copper/topaquinone oxidase family. In terms of assembly, homodimer; disulfide-linked. Cu cation serves as cofactor. It depends on Ca(2+) as a cofactor. Requires L-topaquinone as cofactor. Topaquinone (TPQ) is generated by copper-dependent autoxidation of a specific tyrosyl residue. As to expression, expressed in lung, spleen, heart and kidney.

The protein localises to the secreted. The protein resides in the extracellular space. The catalysed reaction is a primary methyl amine + O2 + H2O = an aldehyde + H2O2 + NH4(+). This chain is Primary amine oxidase, lung isozyme, found in Bos taurus (Bovine).